Consider the following 373-residue polypeptide: Asporin (373 aa).

The first 15 residues, 1–15 (MKEYVMLLLLAVCSA), serve as a signal peptide directing secretion. The propeptide occupies 16 to 32 (KPFFSPSHTALKNMMLK). O-linked (GalNAc...) serine glycosylation is present at S48. Residues 59–95 (FFPFDLFPTCPFGCQCYSRVVHCSDLGLTSVPNNIPF) form the LRRNT domain. Disulfide bonds link C68/C74 and C72/C81. 11 LRR repeats span residues 96–117 (DTRM…DFKG), 120–141 (SLYA…TFLT), 144–166 (KLRR…PKSL), 167–186 (AELR…TFKG), 189–212 (ALHV…AFEG), 235–255 (TLLE…EDLK), 259–280 (ELQR…TFAN), 283–305 (RVRE…QELK), 306–327 (YLQI…DFCP), 328–349 (TVPK…PMKY), and 350–373 (WEIQ…NVGK). Residues 159 to 205 (PLNLPKSLAELRIHDNKVKKIQKDTFKGMNALHVLEMSANPLENNGI) form an interaction with TGFB1 region. N-linked (GlcNAc...) asparagine glycosylation is present at N275. Residues C326 and C359 are joined by a disulfide bond.

The protein belongs to the small leucine-rich proteoglycan (SLRP) family. SLRP class I subfamily. Interacts with type I collagen. DCN can inhibit collagen binding. Interacts with TGFB1, TGFB2 and TGFB3. DCN, BGN, and FMOD inhibit binding to TGFB1. Interacts with BMP2. Interacts in vitro with type II collagen. As to expression, higher expression in heart, also detected in kidney, stomach, testes, and skin but only weakly in lung, skeletal muscle, small intestine, and thymus. Expressed specifically and predominantly in the periodontal ligament (PDL). During tooth development, strong expression is seen in the dental follicle, which is the progenitor tissue that forms cementum, alveolar bone, and the PDL. Expressed in the perichondria of the maxilla, mandible, vertebrae, and long bones. Predominantly expressed in the perichondrium/periosteum of long bones (at protein level).

It localises to the secreted. Its subcellular location is the extracellular space. The protein localises to the extracellular matrix. Functionally, binds calcium and plays a role in osteoblast-driven collagen biomineralization activity. Critical regulator of TGF-beta in articular cartilage and plays an essential role in cartilage homeostasis and osteoarthritis (OA) pathogenesis. Negatively regulates chondrogenesis in the articular cartilage by blocking the TGF-beta/receptor interaction on the cell surface and inhibiting the canonical TGF-beta/Smad signal. Negatively regulates periodontal ligament (PDL) differentiation and mineralization to ensure that the PDL is not ossified and to maintain homeostasis of the tooth-supporting system. Inhibits BMP2-induced cytodifferentiation of PDL cells by preventing its binding to BMPR1B/BMP type-1B receptor, resulting in inhibition of BMP-dependent activation of SMAD proteins. Inhibits the interaction between TGFB1 and TGF-beta receptor type II in the presence of heparin/heparan sulfate in vitro. The polypeptide is Asporin (Aspn) (Mus musculus (Mouse)).